Here is a 555-residue protein sequence, read N- to C-terminus: Glycerol dehydratase large subunit (555 aa).

This sequence belongs to the diol/glycerol dehydratase large subunit family. In terms of assembly, probably consists of three subunits: large, medium, and small. The cofactor is adenosylcob(III)alamin.

It carries out the reaction glycerol = 3-hydroxypropanal + H2O. The sequence is that of Glycerol dehydratase large subunit (dhaB) from Citrobacter freundii.